The chain runs to 802 residues: Bifunctional purine biosynthetic protein ADE5,7 (802 aa).

Residues 1–444 (MPEITAFPQP…FRRDIAYRAL (444 aa)) are GARS. The region spanning 126 to 339 (KEFMARHNIP…LAEVLLACVE (214 aa)) is the ATP-grasp domain. 157–218 (KPFTSGRSVI…EEYLSGPEIS (62 aa)) is an ATP binding site. The Mg(2+) site is built by Glu-307 and Asn-309. The segment at 455–788 (LTYAAAGVSV…EAWVIGEVQE (334 aa)) is AIRS.

It in the N-terminal section; belongs to the GARS family. In the C-terminal section; belongs to the AIR synthase family. Homodimer. Requires Mg(2+) as cofactor. It depends on Mn(2+) as a cofactor.

The protein resides in the cytoplasm. The protein localises to the cytosol. The enzyme catalyses 2-formamido-N(1)-(5-O-phospho-beta-D-ribosyl)acetamidine + ATP = 5-amino-1-(5-phospho-beta-D-ribosyl)imidazole + ADP + phosphate + H(+). It catalyses the reaction 5-phospho-beta-D-ribosylamine + glycine + ATP = N(1)-(5-phospho-beta-D-ribosyl)glycinamide + ADP + phosphate + H(+). It participates in purine metabolism; IMP biosynthesis via de novo pathway; 5-amino-1-(5-phospho-D-ribosyl)imidazole from N(2)-formyl-N(1)-(5-phospho-D-ribosyl)glycinamide: step 2/2. Its pathway is purine metabolism; IMP biosynthesis via de novo pathway; N(1)-(5-phospho-D-ribosyl)glycinamide from 5-phospho-alpha-D-ribose 1-diphosphate: step 2/2. Catalyzes the second and fifth step in the 'de novo' purine biosynthesis pathway; contains phosphoribosylamine--glycine ligase (GARS) and phosphoribosylformylglycinamidine cyclo-ligase (AIRS) activities. This Cryptococcus neoformans var. grubii serotype A (strain H99 / ATCC 208821 / CBS 10515 / FGSC 9487) (Filobasidiella neoformans var. grubii) protein is Bifunctional purine biosynthetic protein ADE5,7.